The sequence spans 582 residues: ATP-dependent lipid A-core flippase (582 aa).

Transmembrane regions (helical) follow at residues 16–36 (LWPTIAPFKAGLIVAGIALIL), 64–84 (LLWMPLVVIGLMILRGITSYI), 153–173 (IIGLFIMMFYYSWQLSIILVV), 253–273 (PIIQLIASLALAFVLYAASFP), and 275–295 (VMDSLTAGTITVVFSSMIALM). In terms of domain architecture, ABC transmembrane type-1 spans 28-310 (IVAGIALILN…LTNVNAQFQR (283 aa)). The 237-residue stretch at 342–578 (LEFRNVTFTY…HGVYAQLHKM (237 aa)) folds into the ABC transporter domain. 376 to 383 (GRSGSGKS) serves as a coordination point for ATP.

It belongs to the ABC transporter superfamily. Lipid exporter (TC 3.A.1.106) family. In terms of assembly, homodimer.

It localises to the cell inner membrane. The catalysed reaction is ATP + H2O + lipid A-core oligosaccharideSide 1 = ADP + phosphate + lipid A-core oligosaccharideSide 2.. In terms of biological role, involved in lipopolysaccharide (LPS) biosynthesis. Translocates lipid A-core from the inner to the outer leaflet of the inner membrane. Transmembrane domains (TMD) form a pore in the inner membrane and the ATP-binding domain (NBD) is responsible for energy generation. The polypeptide is ATP-dependent lipid A-core flippase (Salmonella paratyphi A (strain ATCC 9150 / SARB42)).